The primary structure comprises 450 residues: WD repeat-containing protein ATCSA-1 (450 aa).

WD repeat units follow at residues 41–81 (PHRG…DYEA), 101–141 (GHKY…AVVD), 148–185 (VYRT…FSHT), and 188–228 (GHRD…CFRV). The segment at 269-298 (LQSKQTGSQSVKGSSSAKASVEKSRQKRIH) is disordered. Positions 271–287 (SKQTGSQSVKGSSSAKA) are enriched in low complexity. WD repeat units follow at residues 310–349 (AHYG…NTLV) and 397–436 (GHYE…EDEM).

Interacts with DDB1A. Expressed in roots, leaves, stems, flowers and siliques.

Its subcellular location is the nucleus. Involved in UV-B tolerance and genome integrity. In association with DDB2, is necessary for repair of UV-B-induced DNA lesions. This is WD repeat-containing protein ATCSA-1 from Arabidopsis thaliana (Mouse-ear cress).